The sequence spans 483 residues: MGFTLAIVGRPNVGKSTLFNRLVGRKLALVDDLPGVTRDRRIHDAKLYDLKFQVIDTAGLEEAANDSLEARMRAQTEAAISEADAVLFVIDAKAGITPADSTFAEAVRRSGKPVVLVANKAEARGSEAGMYDAFQLGLGEPCPISAEHGQGMPDLRDAIVELLGEERVFAEERQEEAADEVFTPAAVGALVGDDIEDPDAEEIPAYDATKPLRIAIVGRPNAGKSTLINTMLGEDRLLTGPEAGITRDSISADWEWHGRKIKLFDTAGMRRKARVQEKLEKLSVADSLRAIRFAEVVIIVLDATIPFEKQDLQIADLIIREGRAPVIAFNKWDLIEDRQMVLADLYEKTARLLPQVRGLRAVPISGERGQGIDKLMENVVKTHEIWNRRISTGRLNRWLEGVIAHQPPPAVSGRRLKVKYMTQVKTRPPGFVVSCSRPDAMPQSYVRYLINGLRETFDMPGVPIRLSLRTSDNPFAGRAKKKK.

EngA-type G domains lie at 3–167 and 212–387; these read FTLA…GEER and LRIA…EIWN. GTP is bound by residues 9–16, 56–60, 119–122, 218–225, 265–269, and 330–333; these read GRPNVGKS, DTAGL, NKAE, GRPNAGKS, DTAGM, and NKWD. Positions 388 to 472 constitute a KH-like domain; that stretch reads RRISTGRLNR…PIRLSLRTSD (85 aa).

Belongs to the TRAFAC class TrmE-Era-EngA-EngB-Septin-like GTPase superfamily. EngA (Der) GTPase family. As to quaternary structure, associates with the 50S ribosomal subunit.

Functionally, GTPase that plays an essential role in the late steps of ribosome biogenesis. This Brucella melitensis biotype 2 (strain ATCC 23457) protein is GTPase Der.